A 106-amino-acid polypeptide reads, in one-letter code: ATP-dependent Clp protease adapter protein ClpS (106 aa).

This sequence belongs to the ClpS family. As to quaternary structure, binds to the N-terminal domain of the chaperone ClpA.

Involved in the modulation of the specificity of the ClpAP-mediated ATP-dependent protein degradation. This is ATP-dependent Clp protease adapter protein ClpS from Methylococcus capsulatus (strain ATCC 33009 / NCIMB 11132 / Bath).